The sequence spans 452 residues: MDVIPSTTPGEAVRISAKRTAELFGPEYLMVTPSASNGSIGVSYRRKTEYEHVKELPPALAAKQAQAAAARSKRPKISSRSEGSGSGDKSGASTALVRRGGRASGAAGDDKPTSLIQRPSATRQQPPEWHAPWKLMRVISGHLGWVRSLAVEPNNEWFASGAGDRTIKIWNLATGALRLTLTGHISTVRGLAVSPRHPYLFSCGEDKMVKCWDLETNKVIRHYHGHLSGVYTLALHPRLDLLVTGGRDGVARVWDMRTRSNIHVLSGHTGTVADVQCQEADPQVITGSLDATVRLWDLAAGKTMGVLTHHKKGIRSLATHPREFTFASASTGSIKQWKCPGGEFMQNFEGHNAIINTLSVNEDNVLFSGGDNGSMSFWDWKTGYRYQTIDTTAQPGSLEAEAGIMTSTFDRTGLRLITGEADKTIKVWKQDDQATPETHPVTWAPTLGRQRY.

The segment covering 61–70 (AAKQAQAAAA) has biased composition (low complexity). Residues 61-129 (AAKQAQAAAA…SATRQQPPEW (69 aa)) form a disordered region. Positions 114 to 125 (SLIQRPSATRQQ) are enriched in polar residues. WD repeat units lie at residues 141–180 (GHLGWVRSLAVEPNNEWFASGAGDRTIKIWNLATGALRLT), 183–222 (GHISTVRGLAVSPRHPYLFSCGEDKMVKCWDLETNKVIRH), 225–264 (GHLSGVYTLALHPRLDLLVTGGRDGVARVWDMRTRSNIHV), 267–308 (GHTG…GVLT), 310–349 (HKKGIRSLATHPREFTFASASTGSIKQWKCPGGEFMQNFE), 350–388 (GHNAIINTLSVNEDNVLFSGGDNGSMSFWDWKTGYRYQT), and 399–438 (EAEAGIMTSTFDRTGLRLITGEADKTIKVWKQDDQATPET). The interval 432–452 (DQATPETHPVTWAPTLGRQRY) is disordered.

Belongs to the WD repeat PRL1/PRL2 family. As to quaternary structure, associated with the spliceosome.

Its subcellular location is the cytoplasm. It is found in the nucleus. In terms of biological role, involved in pre-mRNA splicing and required for cell cycle progression at G2/M. The polypeptide is Pre-mRNA-splicing factor prp46 (prp46) (Emericella nidulans (strain FGSC A4 / ATCC 38163 / CBS 112.46 / NRRL 194 / M139) (Aspergillus nidulans)).